A 729-amino-acid chain; its full sequence is Rab-like protein 6 (729 aa).

The residue at position 1 (methionine 1) is an N-acetylmethionine. A small GTPase-like region spans residues 39 to 279; that stretch reads GVQYNMKIVI…IFLEMMEARS (241 aa). Residues 50-57, 100-104, and 177-179 each bind GTP; these read GDRNTGKT, DVVDK, and YRD. The disordered stretch occupies residues 281 to 729; it reads GHASPLAANG…HPGGGDYEEL (449 aa). A compositionally biased stretch (low complexity) spans 290 to 315; the sequence is GQSPSPGSQSPVVPAGAVSTGSSSPG. Residues 331–351 show a composition bias toward pro residues; it reads SSVPPVPPSEALPPPACPSAP. Over residues 395–416 the composition is skewed to basic and acidic residues; the sequence is PDDRLDRSFLEDTTPARDEKKV. 8 positions are modified to phosphoserine: serine 402, serine 425, serine 427, serine 470, serine 471, serine 492, serine 525, and serine 577. The span at 489-502 shows a compositional bias: polar residues; it reads QQCSEPETKWSSIP. Basic and acidic residues predominate over residues 581–595; that stretch reads DTQRRADDFPVRDDP. Serine 596 carries the post-translational modification Phosphoserine. Acidic residues predominate over residues 596-605; sequence SDVTDEDEGP. The residue at position 599 (threonine 599) is a Phosphothreonine. Pro residues predominate over residues 606-615; it reads AEPPPPPKLP. The span at 635–652 shows a compositional bias: basic and acidic residues; sequence AGPKESSEEGKEGKTPSK. Phosphoserine occurs at positions 640 and 641. The interval 655 to 693 is interaction with CDKN2A; that stretch reads KKKKKKGKEEEEKAAKKKSKHKKSKDKEEGKEERRRRQQ. Residues 669-678 show a composition bias toward basic residues; the sequence is AKKKSKHKKS. The span at 679–689 shows a compositional bias: basic and acidic residues; it reads KDKEEGKEERR. Positions 711–729 are enriched in gly residues; it reads LGGGAPGGRHPGGGDYEEL.

The protein belongs to the small GTPase superfamily. Rab family. Post-translationally, isoform 1 is O-glycosylated, while other isoforms are not.

It localises to the cytoplasm. The protein resides in the nucleus. Its function is as follows. May enhance cellular proliferation. May reduce growth inhibitory activity of CDKN2A. The protein is Rab-like protein 6 (RABL6) of Homo sapiens (Human).